Reading from the N-terminus, the 375-residue chain is MSCPVIELTQQLIRRPSLSPDDAGCQALLIERLQAIGFTVERMDFADTQNFWAWRGQGETLAFAGHTDVVPPGDADRWINPPFEPTIRDGMLFGRGAADMKGSLAAMVVAAERFVAQHPNHTGRLAFLITSDEEASAHNGTVKVVEALMARNERLDYCLVGEPSSIEVVGDVVKNGRRGSLTCNLTIHGVQGHVAYPHLADNPVHRAAPFLNELVAIEWDQSNEFFPATSMQIANIQAGTGSNNVTPGELFVQFNFRFSTELTDEMIKAQVLALLEKHQLRYTVDWWLSGQPFLTARGKLVDAVVNAVEHYNEIKPQLLTTGGTSDGRFIARMGAQVVELGPVNATIHKINECVNAADLQLLARMYQRIMEQLVA.

His-66 lines the Zn(2+) pocket. Residue Asp-68 is part of the active site. Position 99 (Asp-99) interacts with Zn(2+). Glu-133 (proton acceptor) is an active-site residue. Glu-134, Glu-162, and His-348 together coordinate Zn(2+).

Belongs to the peptidase M20A family. DapE subfamily. As to quaternary structure, homodimer. Zn(2+) is required as a cofactor. The cofactor is Co(2+).

The catalysed reaction is N-succinyl-(2S,6S)-2,6-diaminopimelate + H2O = (2S,6S)-2,6-diaminopimelate + succinate. The protein operates within amino-acid biosynthesis; L-lysine biosynthesis via DAP pathway; LL-2,6-diaminopimelate from (S)-tetrahydrodipicolinate (succinylase route): step 3/3. In terms of biological role, catalyzes the hydrolysis of N-succinyl-L,L-diaminopimelic acid (SDAP), forming succinate and LL-2,6-diaminopimelate (DAP), an intermediate involved in the bacterial biosynthesis of lysine and meso-diaminopimelic acid, an essential component of bacterial cell walls. The sequence is that of Succinyl-diaminopimelate desuccinylase from Shigella dysenteriae serotype 1 (strain Sd197).